Reading from the N-terminus, the 332-residue chain is HPr kinase/phosphorylase (332 aa).

Catalysis depends on residues H153 and K174. 168–175 (GKSGLGKS) contributes to the ATP binding site. Residue S175 participates in Mg(2+) binding. The Proton acceptor; for phosphorylation activity. Proton donor; for dephosphorylation activity role is filled by D192. The important for the catalytic mechanism of both phosphorylation and dephosphorylation stretch occupies residues 217-226 (MEIRGLGVVD). E218 serves as a coordination point for Mg(2+). The active site involves R259. Residues 280-285 (PIFPGK) are important for the catalytic mechanism of dephosphorylation.

This sequence belongs to the HPrK/P family. Homohexamer. Mg(2+) is required as a cofactor.

The catalysed reaction is [HPr protein]-L-serine + ATP = [HPr protein]-O-phospho-L-serine + ADP + H(+). The enzyme catalyses [HPr protein]-O-phospho-L-serine + phosphate + H(+) = [HPr protein]-L-serine + diphosphate. Its function is as follows. Catalyzes the ATP- as well as the pyrophosphate-dependent phosphorylation of a specific serine residue in HPr, a phosphocarrier protein of the phosphoenolpyruvate-dependent sugar phosphotransferase system (PTS). HprK/P also catalyzes the pyrophosphate-producing, inorganic phosphate-dependent dephosphorylation (phosphorolysis) of seryl-phosphorylated HPr (P-Ser-HPr). The polypeptide is HPr kinase/phosphorylase (Chlorobium phaeovibrioides (strain DSM 265 / 1930) (Prosthecochloris vibrioformis (strain DSM 265))).